A 278-amino-acid polypeptide reads, in one-letter code: Phosphatidylglycerol--prolipoprotein diacylglyceryl transferase (278 aa).

The next 4 membrane-spanning stretches (helical) occupy residues 19-39 (WYGILMATGVLVATLMAINEG), 49-69 (FIDFLLWAVPIGFIGARIYYV), 83-103 (IIAIWNGGIAIYGGLIAGLIV), and 112-132 (MLPPFLMLDIIAPGVMAAQVI). Residue Arg-134 participates in a 1,2-diacyl-sn-glycero-3-phospho-(1'-sn-glycerol) binding. A run of 3 helical transmembrane segments spans residues 174-194 (QPTYLYESALNLVGLILILSL), 204-224 (GEVFFSYVIWYAAVRFFVEGM), and 235-255 (IRVSQALSLILFFGAIILWVY).

The protein belongs to the Lgt family.

The protein localises to the cell membrane. The enzyme catalyses L-cysteinyl-[prolipoprotein] + a 1,2-diacyl-sn-glycero-3-phospho-(1'-sn-glycerol) = an S-1,2-diacyl-sn-glyceryl-L-cysteinyl-[prolipoprotein] + sn-glycerol 1-phosphate + H(+). The protein operates within protein modification; lipoprotein biosynthesis (diacylglyceryl transfer). Its function is as follows. Catalyzes the transfer of the diacylglyceryl group from phosphatidylglycerol to the sulfhydryl group of the N-terminal cysteine of a prolipoprotein, the first step in the formation of mature lipoproteins. This chain is Phosphatidylglycerol--prolipoprotein diacylglyceryl transferase, found in Lactobacillus gasseri (strain ATCC 33323 / DSM 20243 / BCRC 14619 / CIP 102991 / JCM 1131 / KCTC 3163 / NCIMB 11718 / NCTC 13722 / AM63).